A 158-amino-acid polypeptide reads, in one-letter code: Peptide methionine sulfoxide reductase MsrA (158 aa).

Cys-10 is a catalytic residue.

Belongs to the MsrA Met sulfoxide reductase family.

The enzyme catalyses L-methionyl-[protein] + [thioredoxin]-disulfide + H2O = L-methionyl-(S)-S-oxide-[protein] + [thioredoxin]-dithiol. The catalysed reaction is [thioredoxin]-disulfide + L-methionine + H2O = L-methionine (S)-S-oxide + [thioredoxin]-dithiol. Its function is as follows. Has an important function as a repair enzyme for proteins that have been inactivated by oxidation. Catalyzes the reversible oxidation-reduction of methionine sulfoxide in proteins to methionine. The chain is Peptide methionine sulfoxide reductase MsrA from Alkaliphilus metalliredigens (strain QYMF).